We begin with the raw amino-acid sequence, 172 residues long: Translationally-controlled tumor protein homolog (172 aa).

Residues 1–172 (MIIFKDLLTG…FKHGLDEEKV (172 aa)) enclose the TCTP domain.

This sequence belongs to the TCTP family. As to expression, expressed by the venom gland.

Its subcellular location is the secreted. In terms of biological role, venom protein that causes edema, enhances vascular permeability and is likely related to the inflammatory activity of the venom. The polypeptide is Translationally-controlled tumor protein homolog (Loxosceles intermedia (Brown spider)).